We begin with the raw amino-acid sequence, 740 residues long: Ribosomal protein S6 kinase alpha-6 (740 aa).

Positions 67-326 (FELLKVLGQG…VEEIKRHTFF (260 aa)) constitute a Protein kinase 1 domain. Residues 73-81 (LGQGSFGKV) and Lys99 each bind ATP. Asp192 functions as the Proton acceptor in the catalytic mechanism. The region spanning 327-396 (STIDWNKLYR…VAPVSLEESK (70 aa)) is the AGC-kinase C-terminal domain. Residues 420 to 677 (YELKEDIGVG…AEQVLKHSWI (258 aa)) form the Protein kinase 2 domain. ATP is bound by residues 426–434 (IGVGSYSIC) and Lys449. Catalysis depends on Asp537, which acts as the Proton acceptor.

The protein belongs to the protein kinase superfamily. AGC Ser/Thr protein kinase family. S6 kinase subfamily. In terms of assembly, forms a complex with either ERK1 or ERK2 in quiescent cells. Transiently dissociates following mitogenic stimulation. Requires Mg(2+) as cofactor.

The catalysed reaction is L-seryl-[protein] + ATP = O-phospho-L-seryl-[protein] + ADP + H(+). The enzyme catalyses L-threonyl-[protein] + ATP = O-phospho-L-threonyl-[protein] + ADP + H(+). Activated by multiple phosphorylations on threonine and serine residues. Serine/threonine kinase that may play a role in mediating the growth-factor and stress induced activation of the transcription factor CREB. The polypeptide is Ribosomal protein S6 kinase alpha-6 (rps6ka6) (Danio rerio (Zebrafish)).